The following is a 119-amino-acid chain: Protein TusC (119 aa).

The protein belongs to the DsrF/TusC family. Heterohexamer, formed by a dimer of trimers. The hexameric TusBCD complex contains 2 copies each of TusB, TusC and TusD. The TusBCD complex interacts with TusE.

Its subcellular location is the cytoplasm. Functionally, part of a sulfur-relay system required for 2-thiolation of 5-methylaminomethyl-2-thiouridine (mnm(5)s(2)U) at tRNA wobble positions. In Serratia proteamaculans (strain 568), this protein is Protein TusC.